Here is a 506-residue protein sequence, read N- to C-terminus: Abscisic acid 8'-hydroxylase 2 (506 aa).

A helical membrane pass occupies residues 3–23; sequence FLLFFVFVTAAVLCFVVPAFL. Cys437 lines the heme pocket.

It belongs to the cytochrome P450 family. It depends on heme as a cofactor. In terms of tissue distribution, in internodes and expanding leaves. Weak expression in seedlings.

Its subcellular location is the membrane. It carries out the reaction 2-cis-(+)-abscisate + reduced [NADPH--hemoprotein reductase] + O2 = (+)-8'-hydroxyabscisate + oxidized [NADPH--hemoprotein reductase] + H2O + H(+). It participates in plant hormone degradation; abscisic acid degradation. Involved in the oxidative degradation of abscisic acid. This Oryza sativa subsp. indica (Rice) protein is Abscisic acid 8'-hydroxylase 2 (CYP707A6).